The primary structure comprises 218 residues: UPF0502 protein VS_II0353 (218 aa).

It belongs to the UPF0502 family.

This is UPF0502 protein VS_II0353 from Vibrio atlanticus (strain LGP32) (Vibrio splendidus (strain Mel32)).